The sequence spans 642 residues: Nocturnin (642 aa).

The disordered stretch occupies residues 50-87; it reads LEDDDKPPQLFSVTDEPPSPNEEDYKPPNHHEDDGKLA. A compositionally biased stretch (basic and acidic residues) spans 72 to 87; the sequence is EDYKPPNHHEDDGKLA. Residue glutamate 363 participates in Mg(2+) binding. Substrate-binding positions include glutamate 363, asparagine 430, 453–456, 491–493, and histidine 600; these read HLKA and DFN. Positions 611 to 642 are disordered; that stretch reads PPTENGKESGSGSGSDGENETEVEGSKHGSIQ.

It belongs to the CCR4/nocturin family. Associates to the CCR4-NOT complex composed of at least Pop2/Caf1-55, Ccr4, Not1, Rga/Not2, and Not3. Mg(2+) is required as a cofactor. As to expression, expressed in the head, in the dorsal neurons DN3, a subgroup of clock neurons (at protein level). Ubiquitously expressed in both males and females.

Its subcellular location is the cytoplasm. The enzyme catalyses NADP(+) + H2O = phosphate + NAD(+). It carries out the reaction NADPH + H2O = phosphate + NADH. Its function is as follows. Phosphatase which catalyzes the conversion of NADP(+) to NAD(+) and of NADPH to NADH. Shows a small preference for NADPH over NADP(+). Because of its association with the CCR4-NOT complex, has a role in mRNA deadenylation and decay. Required at the pupal stage for proper wing morphogenesis after eclosion. In terms of biological role, doesn't have a role in light-mediated behavioral response. In dorsal neurons, contributes to the light-mediated behavioral response. The chain is Nocturnin from Drosophila melanogaster (Fruit fly).